The chain runs to 423 residues: Deferrochelatase (423 aa).

The segment at residues 1-35 is a signal peptide (tat-type signal); sequence MQYEDENGVNEPSRRRLLKGIGALALAGSCPVAHA. Residues 236–238, His329, 334–336, and Arg347 each bind heme b; these read GTA and NPR.

Belongs to the DyP-type peroxidase family. EfeB subfamily. In terms of assembly, homodimer. Part of a ferrous iron transporter composed of EfeU, EfeO and EfeB. Requires heme b as cofactor. Predicted to be exported by the Tat system. The position of the signal peptide cleavage has not been experimentally proven.

The protein localises to the periplasm. The enzyme catalyses heme b + 2 H(+) = protoporphyrin IX + Fe(2+). Functionally, involved in the recovery of exogenous heme iron. Extracts iron from heme while preserving the protoporphyrin ring intact. This is Deferrochelatase (efeB) from Escherichia coli O6:H1 (strain CFT073 / ATCC 700928 / UPEC).